The sequence spans 779 residues: uncharacterized protein (779 aa).

[4Fe-4S] cluster-binding residues include C72 and C75.

Belongs to the prokaryotic molybdopterin-containing oxidoreductase family. It depends on [4Fe-4S] cluster as a cofactor. The cofactor is Mo-bis(molybdopterin guanine dinucleotide).

This is an uncharacterized protein from Mycobacterium bovis (strain ATCC BAA-935 / AF2122/97).